The following is a 70-amino-acid chain: DNA gyrase inhibitor YacG (70 aa).

4 residues coordinate Zn(2+): cysteine 9, cysteine 12, cysteine 28, and cysteine 32. The interval 43–70 (ESRKIPGSSIDPESIVTSNNKQDNEDEQ) is disordered.

This sequence belongs to the DNA gyrase inhibitor YacG family. Interacts with GyrB. Zn(2+) serves as cofactor.

Its function is as follows. Inhibits all the catalytic activities of DNA gyrase by preventing its interaction with DNA. Acts by binding directly to the C-terminal domain of GyrB, which probably disrupts DNA binding by the gyrase. The protein is DNA gyrase inhibitor YacG of Legionella pneumophila (strain Paris).